The primary structure comprises 336 residues: Potassium channel subfamily K member 1 (336 aa).

The Cytoplasmic portion of the chain corresponds to 1–20 (MLQSLAGSSCVRLVERHRSA). A helical membrane pass occupies residues 21–41 (WCFGFLVLGYLLYLVFGAVVF). Over 42-103 (SSVELPYEDL…SNASGNWNWD (62 aa)) the chain is Extracellular. An N-linked (GlcNAc...) asparagine glycan is attached at Asn95. The helical intramembrane region spans 104 to 116 (FTSALFFASTVLS). The stretch at 117–122 (TTGYGH) is an intramembrane region. The tract at residues 117 to 122 (TTGYGH) is selectivity filter 1. Over 123-132 (TVPLSDGGKA) the chain is Extracellular. A helical transmembrane segment spans residues 133–156 (FCIIYSVIGIPFTLLFLTAVVQRV). At 157–181 (TVHVTRRPVLYFHIRWGFSKQVVAI) the chain is on the cytoplasmic side. Residues 182 to 202 (VHAVLLGFVTVSCFFFIPAAV) form a helical membrane-spanning segment. The Extracellular segment spans residues 203–211 (FSVLEDDWN). The segment at residues 212–224 (FLESFYFCFISLS) is an intramembrane region (helical). The interval 225-230 (TIGLGD) is selectivity filter 2. The stretch at 225–231 (TIGLGDY) is an intramembrane region. The Extracellular portion of the chain corresponds to 232–243 (VPGEGYNQKFRE). The chain crosses the membrane as a helical span at residues 244–267 (LYKIGITCYLLLGLIAMLVVLETF). Residues 268–336 (CELHELKKFR…PPYEDGSADH (69 aa)) are Cytoplasmic-facing. Lys274 is covalently cross-linked (Glycyl lysine isopeptide (Lys-Gly) (interchain with G-Cter in SUMO)). An important for intracellular retention in recycling endosomes region spans residues 293-299 (IMEHDQL). A disordered region spans residues 310-336 (GLKEEQKQSEPFVASQSPPYEDGSADH). At Ser326 the chain carries Phosphoserine.

Belongs to the two pore domain potassium channel (TC 1.A.1.8) family. Homodimer; disulfide-linked. Heterodimer with KCNK2; disulfide-linked. In astrocytes, forms mostly heterodimeric potassium channels with KCNK2, with only a minor proportion of functional channels containing homodimeric KCNK1. Interacts with KCNK3 and KCNK9, forming functional heterodimeric channels. Interacts with GNG4. Identified in a complex with PSD and ARF6; interacts only with PSD that is bound to ARF6. Interacts with UBE2I. In terms of processing, sumoylation is controversial. Sumoylated by UBE2I. Not sumoylated when expressed in xenopus oocytes or mammalian cells. Sumoylation inactivates the channel, but does not interfere with expression at the cell membrane. Sumoylation of a single subunit is sufficient to silence the dimeric channel. Sumoylation of KCNK1 is sufficient to silence heterodimeric channels formed by KCNK1 and KCNK3 or KCNK9. Desumoylated by SENP1; this activates the channel. Desumoylated by SENP1; this strongly increases halothane-mediated activation of heterodimeric channels formed with KCNK9. SENP1 treatment has no effect. Detected in spiral ganglion neurons. Detected in hippocampus CA1 and CA1 regions and in the molecular layer of the dentate gyrus. Detected on hippocampus astrocytes. Highly expressed in the stria vascularis in the cochlea. Detected in pancreas islet beta cells. Detected in kidney, at brush border membranes in proximal tubules and in cytoplasmic structures in distal convoluted tubules, thick ascending limbs and collecting ducts (at protein level). Widely expressed. Detected in spiral ganglion cells. Highest expression in brain, kidney, thyroid, salivary gland, adrenal gland, prostate, epididymis, uterus, placenta, colon and jejunum. Moderate expression in eyes, pituitary, pancreas, smooth muscle, testis and ovary. Very low levels in lung, aorta, liver, heart, skeletal muscle, thymus and spleen. In the brain, highest expression in cerebellar granule cells, brainstem, hippocampus and cerebral cortex.

Its subcellular location is the cell membrane. The protein localises to the recycling endosome. It localises to the apical cell membrane. It is found in the cytoplasmic vesicle. The protein resides in the perikaryon. Its subcellular location is the cell projection. The protein localises to the dendrite. It localises to the synaptic cell membrane. The enzyme catalyses K(+)(in) = K(+)(out). The catalysed reaction is NH4(+)(in) = NH4(+)(out). It catalyses the reaction Na(+)(in) = Na(+)(out). It carries out the reaction Rb(+)(in) = Rb(+)(out). The enzyme catalyses Cs(+)(in) = Cs(+)(out). The catalysed reaction is Li(+)(in) = Li(+)(out). It catalyses the reaction L-glutamate(out) = L-glutamate(in). It carries out the reaction chloride(in) = chloride(out). Inhibited by quinine, quinidine, barium, and internal acidification. In terms of biological role, ion channel that contributes to passive transmembrane potassium transport and to the regulation of the resting membrane potential in brain astrocytes, but also in kidney and in other tissues. Forms dimeric channels through which potassium ions pass in accordance with their electrochemical gradient. The channel is selective for K(+) ions at physiological potassium concentrations and at neutral pH, but becomes permeable to Na(+) at subphysiological K(+) levels and upon acidification of the extracellular medium. The homodimer has very low potassium channel activity, when expressed in heterologous systems, and can function as weakly inward rectifying potassium channel. Channel activity is modulated by activation of serotonin receptors. Heterodimeric channels containing KCNK1 and KCNK2 have much higher activity, and may represent the predominant form in astrocytes. Heterodimeric channels containing KCNK1 and KCNK3 or KCNK9 have much higher activity. Heterodimeric channels formed by KCNK1 and KCNK9 may contribute to halothane-sensitive currents. Mediates outward rectifying potassium currents in dentate gyrus granule cells and contributes to the regulation of their resting membrane potential. Contributes to the regulation of action potential firing in dentate gyrus granule cells and down-regulates their intrinsic excitability. In astrocytes, the heterodimer formed by KCNK1 and KCNK2 is required for rapid glutamate release in response to activation of G-protein coupled receptors, such as F2R and CNR1. Required for normal ion and water transport in the kidney. Contributes to the regulation of the resting membrane potential of pancreatic beta cells. The low channel activity of homodimeric KCNK1 may be due to sumoylation. The low channel activity may be due to rapid internalization from the cell membrane and retention in recycling endosomes. Permeable to monovalent cations with ion selectivity for K(+) &gt; Rb(+) &gt;&gt; NH4(+) &gt;&gt; Cs(+) = Na(+) = Li(+). In Mus musculus (Mouse), this protein is Potassium channel subfamily K member 1 (Kcnk1).